The following is a 284-amino-acid chain: NAD kinase (284 aa).

Asp-61 serves as the catalytic Proton acceptor. NAD(+)-binding positions include 61–62, Arg-66, 136–137, Arg-147, Lys-164, Asp-166, and Leu-201; these read DG and ND.

This sequence belongs to the NAD kinase family. It depends on a divalent metal cation as a cofactor.

The protein localises to the cytoplasm. It catalyses the reaction NAD(+) + ATP = ADP + NADP(+) + H(+). Functionally, involved in the regulation of the intracellular balance of NAD and NADP, and is a key enzyme in the biosynthesis of NADP. Catalyzes specifically the phosphorylation on 2'-hydroxyl of the adenosine moiety of NAD to yield NADP. The polypeptide is NAD kinase (Dehalococcoides mccartyi (strain CBDB1)).